Consider the following 1085-residue polypeptide: Phosphorylase b kinase regulatory subunit beta (1085 aa).

Ser10, Ser19, and Ser693 each carry phosphoserine. 2 calmodulin-binding regions span residues 760–787 (RVYR…VVDS) and 912–943 (SGRC…ILER). Residue Cys1082 is the site of S-farnesyl cysteine attachment.

The protein belongs to the phosphorylase b kinase regulatory chain family. In terms of assembly, hexadecamer of 4 heterotetramers, each composed of alpha, beta, gamma, and delta subunits. Alpha (PHKA1 or PHKA2) and beta (PHKB) are regulatory subunits, gamma (PHKG1 or PHKG2) is the catalytic subunit, and delta is calmodulin. Although the final Cys may be farnesylated, the terminal tripeptide is probably not removed, and the C-terminus is not methylated.

The protein resides in the cell membrane. Its pathway is glycan biosynthesis; glycogen metabolism. Its activity is regulated as follows. By phosphorylation of various serine residues. Functionally, phosphorylase b kinase catalyzes the phosphorylation of serine in certain substrates, including troponin I. The beta chain acts as a regulatory unit and modulates the activity of the holoenzyme in response to phosphorylation. In Mus musculus (Mouse), this protein is Phosphorylase b kinase regulatory subunit beta (Phkb).